The primary structure comprises 725 residues: Eukaryotic translation initiation factor 3 subunit B (725 aa).

S23 is modified (phosphoserine). Residues 39–129 (TVVVIEGAPV…HTFVVRKLNQ (91 aa)) enclose the RRM domain. Phosphoserine is present on S135. T136 is modified (phosphothreonine). 3 WD repeats span residues 190-229 (DREN…MCAR), 304-344 (DGKK…LVDK), and 347-386 (IKID…QPAR). Positions 630 to 671 (LTKEDMKKIRKKLKDYNRLFDEEDIAEQSSANRELAARRRQL) form a coiled coil.

Belongs to the eIF-3 subunit B family. In terms of assembly, component of the eukaryotic translation initiation factor 3 (eIF-3) complex. The eIF-3 complex appears to include tif32/eif3a, SPAC25G10.08/eif3b, tif33/eif3c, SPBC4C3.07/eif3f, tif35/eif3g and sum1/eif3i. This set of common subunits may also associate exclusively with either moe1/eif3d and int6/eif3e, or with SPAC821.05/eif3h and SPAC1751.03/eif3m. The eIF-3 complex may also include SPAC3A12.13c/eif3j.

The protein localises to the cytoplasm. Functionally, RNA-binding component of the eukaryotic translation initiation factor 3 (eIF-3) complex, which is involved in protein synthesis of a specialized repertoire of mRNAs and, together with other initiation factors, stimulates binding of mRNA and methionyl-tRNAi to the 40S ribosome. The eIF-3 complex specifically targets and initiates translation of a subset of mRNAs involved in cell proliferation. The sequence is that of Eukaryotic translation initiation factor 3 subunit B from Schizosaccharomyces pombe (strain 972 / ATCC 24843) (Fission yeast).